The following is a 153-amino-acid chain: Regulator of sigma D (153 aa).

Belongs to the Rsd/AlgQ family. As to quaternary structure, interacts with RpoD.

The protein localises to the cytoplasm. Binds RpoD and negatively regulates RpoD-mediated transcription activation by preventing the interaction between the primary sigma factor RpoD with the catalytic core of the RNA polymerase and with promoter DNA. May be involved in replacement of the RNA polymerase sigma subunit from RpoD to RpoS during the transition from exponential growth to the stationary phase. The polypeptide is Regulator of sigma D (Pectobacterium atrosepticum (strain SCRI 1043 / ATCC BAA-672) (Erwinia carotovora subsp. atroseptica)).